A 387-amino-acid polypeptide reads, in one-letter code: Patatin-12 (387 aa).

The N-terminal stretch at 1 to 23 (MATTKSFLILIVMILATTSSTFA) is a signal peptide. Residues 32–230 (LSIDGGGIKG…TVGDPALLSL (199 aa)) form the PNPLA domain. The GXGXXG signature appears at 36–41 (GGGIKG). Residues 75 to 79 (GTSTG) carry the GXSXG motif. The Nucleophile role is filled by Ser77. An N-linked (GlcNAc...) asparagine glycan is attached at Asn115. Residue Asp216 is the Proton acceptor of the active site. A DGA/G motif is present at residues 216–218 (DGG). Residues 322–385 (ENALTGTTTE…DRKKLRANKA (64 aa)) are a coiled coil.

The protein belongs to the patatin family. Tuber.

It localises to the vacuole. Probable lipolytic acyl hydrolase (LAH), an activity which is thought to be involved in the response of tubers to pathogens. This is Patatin-12 from Solanum tuberosum (Potato).